The sequence spans 483 residues: tRNA (guanine(37)-N(1))-methyltransferase (483 aa).

A disordered region spans residues 1–24 (MEEAATLQSLSISSSSPFPNNSSP). A compositionally biased stretch (low complexity) spans 9–24 (SLSISSSSPFPNNSSP). S-adenosyl-L-methionine is bound by residues H252, 290-291 (DL), and N379.

The protein belongs to the class I-like SAM-binding methyltransferase superfamily. TRM5/TYW2 family. Monomer.

It localises to the mitochondrion matrix. Its subcellular location is the nucleus. The protein resides in the cytoplasm. It carries out the reaction guanosine(37) in tRNA + S-adenosyl-L-methionine = N(1)-methylguanosine(37) in tRNA + S-adenosyl-L-homocysteine + H(+). Functionally, specifically methylates the N1 position of guanosine-37 in various cytoplasmic and mitochondrial tRNAs. Methylation is not dependent on the nature of the nucleoside 5' of the target nucleoside. This is the first step in the biosynthesis of wybutosine (yW), a modified base adjacent to the anticodon of tRNAs and required for accurate decoding. This chain is tRNA (guanine(37)-N(1))-methyltransferase, found in Ajellomyces capsulatus (strain G186AR / H82 / ATCC MYA-2454 / RMSCC 2432) (Darling's disease fungus).